Reading from the N-terminus, the 438-residue chain is Xylose isomerase (438 aa).

Active-site residues include His-103 and Asp-106. Residues Glu-234, Glu-270, His-273, Asp-298, Asp-309, Asp-311, and Asp-341 each coordinate Mg(2+).

Belongs to the xylose isomerase family. As to quaternary structure, homotetramer. It depends on Mg(2+) as a cofactor.

Its subcellular location is the cytoplasm. It catalyses the reaction alpha-D-xylose = alpha-D-xylulofuranose. The polypeptide is Xylose isomerase (Bacteroides thetaiotaomicron (strain ATCC 29148 / DSM 2079 / JCM 5827 / CCUG 10774 / NCTC 10582 / VPI-5482 / E50)).